A 79-amino-acid polypeptide reads, in one-letter code: Defensin-like protein 3 (79 aa).

The first 29 residues, 1 to 29 (MAKFASIVALLFAALVVFAAFEAPTVVEA), serve as a signal peptide directing secretion. Intrachain disulfides connect cysteine 32–cysteine 79, cysteine 43–cysteine 64, cysteine 49–cysteine 73, and cysteine 53–cysteine 75.

The protein belongs to the DEFL family.

The protein resides in the secreted. Possesses antifungal activity sensitive to inorganic cations. The polypeptide is Defensin-like protein 3 (AFP3) (Raphanus sativus (Radish)).